The chain runs to 267 residues: MNALLTNPFKERLRKGEVQIGLWLSSTTSYMAEIAATSGYDWLLIDGEHAPNTIQDLYHQLQAVAPYASQPVIRPVEGSKSLIKQVLDIGAQTLLIPMVDTADQARQVVSATRYPPYGERGVGASVARAARWGRIENYMAQVNDSLCLLVQVESKTALDNLDEILDVEGIDGVFIGPADLSASLGYPDNAGHPEVQRIIETSIRRIRAAGKAAGFLAVAPDMAQQCLAWGANFVAVGVDTMLYSDALDQRLAMFKSGKNGPRIKGSY.

The Proton acceptor role is filled by H49. Q151 is a substrate binding site. E153 is a binding site for Mg(2+). Substrate-binding residues include A178 and D179. Mg(2+) is bound at residue D179.

Belongs to the HpcH/HpaI aldolase family. KDR aldolase subfamily. Homohexamer. The cofactor is Mg(2+).

It catalyses the reaction 2-dehydro-3-deoxy-L-rhamnonate = (S)-lactaldehyde + pyruvate. In terms of biological role, catalyzes the reversible retro-aldol cleavage of 2-keto-3-deoxy-L-rhamnonate (KDR) to pyruvate and lactaldehyde. The sequence is that of 2-keto-3-deoxy-L-rhamnonate aldolase from Escherichia coli O17:K52:H18 (strain UMN026 / ExPEC).